We begin with the raw amino-acid sequence, 262 residues long: Sulfite reductase, dissimilatory-type subunit beta (262 aa).

Positions 151, 188, 189, 193, 231, 258, and 261 each coordinate [4Fe-4S] cluster. C193 is a binding site for siroheme.

As to quaternary structure, heterohexamer of two alpha, two beta and two gamma subunits. The cofactor is [4Fe-4S] cluster. It depends on siroheme as a cofactor.

It carries out the reaction [DsrC protein]-trisulfide + NAD(+) + 3 H2O = [DsrC protein]-dithiol + sulfite + NADH + 3 H(+). Catalyzes the reduction of sulfite to sulfide. This is the terminal oxidation reaction in sulfate respiration, a process catalyzed by the sulfate-reducing bacteria. The protein is Sulfite reductase, dissimilatory-type subunit beta (dsrB) of Megalodesulfovibrio gigas (strain ATCC 19364 / DSM 1382 / NCIMB 9332 / VKM B-1759) (Desulfovibrio gigas).